The following is a 141-amino-acid chain: Putative nickel-responsive regulator (141 aa).

Positions 80, 91, 93, and 99 each coordinate Ni(2+).

Belongs to the transcriptional regulatory CopG/NikR family. Ni(2+) serves as cofactor.

Functionally, transcriptional regulator. In Methanococcus maripaludis (strain C6 / ATCC BAA-1332), this protein is Putative nickel-responsive regulator.